The primary structure comprises 341 residues: Very-long-chain 3-oxoacyl-CoA reductase (341 aa).

A helical transmembrane segment spans residues 22–42; the sequence is AIYGFLLAGVAAFAAPIVSTI. Residues Leu67, Asp123, Asp131, Asn150, Tyr217, Lys221, Ile250, and Thr252 each coordinate NADP(+). Residue Tyr217 is the Proton donor of the active site. The active-site Lowers pKa of active site Tyr is Lys221.

The protein belongs to the short-chain dehydrogenases/reductases (SDR) family.

The protein localises to the endoplasmic reticulum membrane. It catalyses the reaction a very-long-chain (3R)-3-hydroxyacyl-CoA + NADP(+) = a very-long-chain 3-oxoacyl-CoA + NADPH + H(+). It participates in lipid metabolism; fatty acid biosynthesis. In terms of biological role, component of the microsomal membrane bound fatty acid elongation system, which produces the 26-carbon very long-chain fatty acids (VLCFA) from palmitate. Catalyzes the reduction of the 3-ketoacyl-CoA intermediate that is formed in each cycle of fatty acid elongation. VLCFAs serve as precursors for ceramide and sphingolipids. The protein is Very-long-chain 3-oxoacyl-CoA reductase of Phaeosphaeria nodorum (strain SN15 / ATCC MYA-4574 / FGSC 10173) (Glume blotch fungus).